A 347-amino-acid chain; its full sequence is Very-long-chain 3-oxoacyl-CoA reductase (347 aa).

A helical membrane pass occupies residues 20–40; that stretch reads LLWVVFGLGVLKCTTLSLRFL. Positions 66, 120, 147, 223, 227, 256, and 258 each coordinate NADP(+). Residue Y223 is the Proton donor of the active site. K227 acts as the Lowers pKa of active site Tyr in catalysis.

This sequence belongs to the short-chain dehydrogenases/reductases (SDR) family. In terms of assembly, interacts with the fatty acid elongation system components ELO3 and TSC13.

Its subcellular location is the endoplasmic reticulum membrane. The catalysed reaction is a very-long-chain (3R)-3-hydroxyacyl-CoA + NADP(+) = a very-long-chain 3-oxoacyl-CoA + NADPH + H(+). It participates in lipid metabolism; fatty acid biosynthesis. In terms of biological role, component of the microsomal membrane bound fatty acid elongation system, which produces the 26-carbon very long-chain fatty acids (VLCFA) from palmitate. Catalyzes the reduction of the 3-ketoacyl-CoA intermediate that is formed in each cycle of fatty acid elongation. VLCFAs serve as precursors for ceramide and sphingolipids. The protein is Very-long-chain 3-oxoacyl-CoA reductase of Saccharomyces cerevisiae (strain RM11-1a) (Baker's yeast).